The following is a 563-amino-acid chain: MDIRRTVLWMIFSFSLLLLWNNWQIHNGKPSLFGGPAPEAAATQQPKADANGTAASSTASIPSSPAAAPAAASVPGAAAPAAAKSEQVVITTDVLRLTFDSNGAQLIRAELLKYPSSSQSDKPTVLMDRSADLVYVAQTGVVGAPQGESFPTHQTPFHLVSSERSLTGDTLDVVFEAESGGLKVTKTYTLHRGRYDVDVRHAMANTGGAPLSPALYLQLERDGTDPAGTSSFYHTFTGVAVYSEQDKFQKVTFSDIEKKKGTYIKQADNGWIGIVQHYFATAWIPAQGKQRTNELLQVQQNLYAARTIEAVGTIAPGSSANVDAHLWVGPQDQKAMAAVAPGLELVVDYGWLTIIAKPLFTLMTWLHGLLGNWGWTIVALTVIIKAVFFPLAAASYRSMARMKQVAPRLQALKEKYGDDRQKLNQAMMEMYRTEKINPLGGCLPMVVQIPVFIALYWVLLASVEMRGAPWILWVHDLSVRDPFFILPAIMMATMFLQIKLNPTPPDPVQAKVMMIMPLVFGGMMFFFPAGLVLYWCVNNTLSIAQQWTITRNLERQAAAAANR.

Residues 6 to 26 (TVLWMIFSFSLLLLWNNWQIH) form a helical membrane-spanning segment. The disordered stretch occupies residues 36–70 (PAPEAAATQQPKADANGTAASSTASIPSSPAAAPA). Over residues 54 to 70 (AASSTASIPSSPAAAPA) the composition is skewed to low complexity. The next 4 helical transmembrane spans lie at 373–393 (WGWT…PLAA), 443–463 (LPMV…LASV), 482–502 (PFFI…KLNP), and 512–532 (VMMI…AGLV).

It belongs to the OXA1/ALB3/YidC family. Type 1 subfamily. In terms of assembly, interacts with the Sec translocase complex via SecD. Specifically interacts with transmembrane segments of nascent integral membrane proteins during membrane integration.

Its subcellular location is the cell inner membrane. Required for the insertion and/or proper folding and/or complex formation of integral membrane proteins into the membrane. Involved in integration of membrane proteins that insert both dependently and independently of the Sec translocase complex, as well as at least some lipoproteins. Aids folding of multispanning membrane proteins. This Bordetella parapertussis (strain 12822 / ATCC BAA-587 / NCTC 13253) protein is Membrane protein insertase YidC.